The following is a 266-amino-acid chain: Tryptophan synthase alpha chain (266 aa).

Catalysis depends on proton acceptor residues Glu46 and Asp57.

The protein belongs to the TrpA family. As to quaternary structure, tetramer of two alpha and two beta chains.

The enzyme catalyses (1S,2R)-1-C-(indol-3-yl)glycerol 3-phosphate + L-serine = D-glyceraldehyde 3-phosphate + L-tryptophan + H2O. It functions in the pathway amino-acid biosynthesis; L-tryptophan biosynthesis; L-tryptophan from chorismate: step 5/5. The alpha subunit is responsible for the aldol cleavage of indoleglycerol phosphate to indole and glyceraldehyde 3-phosphate. The sequence is that of Tryptophan synthase alpha chain from Lacticaseibacillus casei (Lactobacillus casei).